A 315-amino-acid chain; its full sequence is Ribosomal protein L11 methyltransferase (315 aa).

Residues T162, G183, D205, and N248 each coordinate S-adenosyl-L-methionine.

Belongs to the methyltransferase superfamily. PrmA family.

Its subcellular location is the cytoplasm. The catalysed reaction is L-lysyl-[protein] + 3 S-adenosyl-L-methionine = N(6),N(6),N(6)-trimethyl-L-lysyl-[protein] + 3 S-adenosyl-L-homocysteine + 3 H(+). Its function is as follows. Methylates ribosomal protein L11. This chain is Ribosomal protein L11 methyltransferase, found in Enterococcus faecalis (strain ATCC 700802 / V583).